A 361-amino-acid chain; its full sequence is Aminomethyltransferase (361 aa).

This sequence belongs to the GcvT family. In terms of assembly, the glycine cleavage system is composed of four proteins: P, T, L and H.

It catalyses the reaction N(6)-[(R)-S(8)-aminomethyldihydrolipoyl]-L-lysyl-[protein] + (6S)-5,6,7,8-tetrahydrofolate = N(6)-[(R)-dihydrolipoyl]-L-lysyl-[protein] + (6R)-5,10-methylene-5,6,7,8-tetrahydrofolate + NH4(+). Functionally, the glycine cleavage system catalyzes the degradation of glycine. The polypeptide is Aminomethyltransferase (Bacteroides thetaiotaomicron (strain ATCC 29148 / DSM 2079 / JCM 5827 / CCUG 10774 / NCTC 10582 / VPI-5482 / E50)).